A 239-amino-acid chain; its full sequence is Bidirectional sugar transporter SWEET8 (239 aa).

Residues 1–6 (MVDAKQ) are Extracellular-facing. The helical transmembrane segment at 7 to 27 (VRFIIGVIGNVISFGLFAAPA) threads the bilayer. One can recognise a MtN3/slv 1 domain in the interval 9-98 (FIIGVIGNVI…VYLMYCGHKK (90 aa)). Residues 28–44 (KTFWRIFKKKSVEEFSY) lie on the Cytoplasmic side of the membrane. Residues 45-65 (VPYVATVMNCMLWVFYGLPVV) form a helical membrane-spanning segment. Residues 66–69 (HKDS) lie on the Extracellular side of the membrane. A helical membrane pass occupies residues 70 to 90 (ILVSTINGVGLVIELFYVGVY). At 91–103 (LMYCGHKKNHRRN) the chain is on the cytoplasmic side. Residues 104-124 (ILGFLALEVILVVAIILITLF) traverse the membrane as a helical segment. Topologically, residues 125–135 (ALKGDFVKQTF) are extracellular. The 52-residue stretch at 134–185 (TFVGVICDVFNIAMYGAPSLAIIKVVKTKSVEYMPFLLSLVCFVNAGIWTTY) folds into the MtN3/slv 2 domain. The chain crosses the membrane as a helical span at residues 136-156 (VGVICDVFNIAMYGAPSLAII). At 157–168 (KVVKTKSVEYMP) the chain is on the cytoplasmic side. A helical transmembrane segment spans residues 169-189 (FLLSLVCFVNAGIWTTYSLIF). Residues 190 to 194 (KIDYY) lie on the Extracellular side of the membrane. The helical transmembrane segment at 195-215 (VLASNGIGTFLALSQLIVYFM) threads the bilayer. Over 216 to 239 (YYKSTPKEKTVKPSEVEISATERV) the chain is Cytoplasmic.

This sequence belongs to the SWEET sugar transporter family. In terms of assembly, forms homooligomers and heterooligomers with SWEET4, SWEET5, SWEET6, SWEET7, SWEET9, SWEET10, SWEET11, SWEET13, SWEET15, SWEET16 and SWEET17. As to expression, expressed in inflorescences, embryo sacs and pollen, and at a lower level in stems. Barely detected in roots, leaves and seedlings.

It localises to the cell membrane. Functionally, mediates both low-affinity uptake and efflux of sugar across the plasma membrane. Required, in pollen, for microspore cell integrity and primexine pattern formation. The protein is Bidirectional sugar transporter SWEET8 of Arabidopsis thaliana (Mouse-ear cress).